Reading from the N-terminus, the 145-residue chain is MTKKYLKVDVVSPLGSVFKGEADMVSLRGSAGEMGIVYGHTELLSTLPAGVVNVRKGQHTDVLYVSGGIVEVTPTRVTIMVDDMERAENLNQAEAEKARARAKEVLKNPDASKLDIEAANKRLKEADARLKALNSSNGLYYSKDD.

It belongs to the ATPase epsilon chain family. F-type ATPases have 2 components, CF(1) - the catalytic core - and CF(0) - the membrane proton channel. CF(1) has five subunits: alpha(3), beta(3), gamma(1), delta(1), epsilon(1). CF(0) has three main subunits: a, b and c.

Its subcellular location is the cell inner membrane. Produces ATP from ADP in the presence of a proton gradient across the membrane. This chain is ATP synthase epsilon chain, found in Francisella tularensis subsp. holarctica (strain FTNF002-00 / FTA).